A 461-amino-acid chain; its full sequence is Argininosuccinate lyase (461 aa).

Belongs to the lyase 1 family. Argininosuccinate lyase subfamily.

It localises to the cytoplasm. It catalyses the reaction 2-(N(omega)-L-arginino)succinate = fumarate + L-arginine. The protein operates within amino-acid biosynthesis; L-arginine biosynthesis; L-arginine from L-ornithine and carbamoyl phosphate: step 3/3. The polypeptide is Argininosuccinate lyase (Dehalococcoides mccartyi (strain ATCC BAA-2266 / KCTC 15142 / 195) (Dehalococcoides ethenogenes (strain 195))).